Reading from the N-terminus, the 575-residue chain is Triokinase/FMN cyclase (575 aa).

The 328-residue stretch at 9-336 (SVAGCADDAL…IDAETTAAAW (328 aa)) folds into the DhaK domain. Dihydroxyacetone-binding positions include 56–59 (GSGH), Lys109, and Asp114. His221 acts as the Tele-hemiaminal-histidine intermediate in catalysis. The interval 348–367 (KRSRVAPAEPQEAPDSTAAG) is disordered. Position 350 is a phosphoserine (Ser350). The 200-residue stretch at 372-571 (KRMALVLERV…AAAILRAILE (200 aa)) folds into the DhaL domain. Residues 401 to 404 (DGDC), 446 to 447 (SS), Gly486, and 494 to 495 (TM) contribute to the ATP site. Phosphoserine occurs at positions 511 and 545. Residue 556-558 (DPG) coordinates ATP.

It belongs to the dihydroxyacetone kinase (DAK) family. As to quaternary structure, homodimer. Interacts with IFIH1 (via the CARD domains), the interaction is inhibited by viral infection. Mg(2+) is required as a cofactor. Mn(2+) serves as cofactor. Requires Co(2+) as cofactor. As to expression, detected in erythrocytes (at protein level).

The enzyme catalyses dihydroxyacetone + ATP = dihydroxyacetone phosphate + ADP + H(+). It carries out the reaction D-glyceraldehyde + ATP = D-glyceraldehyde 3-phosphate + ADP + H(+). The catalysed reaction is FAD = riboflavin cyclic-4',5'-phosphate + AMP + H(+). With respect to regulation, each activity is inhibited by the substrate(s) of the other. Its function is as follows. Catalyzes both the phosphorylation of dihydroxyacetone and of glyceraldehyde, and the splitting of ribonucleoside diphosphate-X compounds among which FAD is the best substrate. Represses IFIH1-mediated cellular antiviral response. The chain is Triokinase/FMN cyclase from Homo sapiens (Human).